Consider the following 79-residue polypeptide: MISFFPNKPMYHVQPHISFITPERTMKTIPAFSRWAFAAVAGVFVFAMQVPKVKTTILQPIAFIGDHFKDKTPEEDKWL.

Residues 1 to 23 (MISFFPNKPMYHVQPHISFITPE) lie on the Mitochondrial matrix side of the membrane. The chain crosses the membrane as a helical span at residues 24–47 (RTMKTIPAFSRWAFAAVAGVFVFA). At 48 to 79 (MQVPKVKTTILQPIAFIGDHFKDKTPEEDKWL) the chain is on the mitochondrial intermembrane side.

Belongs to the UQCR11/QCR10 family. Component of the ubiquinol-cytochrome c oxidoreductase (cytochrome b-c1 complex, complex III, CIII), a multisubunit enzyme composed of 3 respiratory subunits cytochrome b, cytochrome c1 and Rieske protein, 2 core protein subunits, and additional low-molecular weight protein subunits. The complex exists as an obligatory dimer and forms supercomplexes (SCs) in the inner mitochondrial membrane with cytochrome c oxidase (complex IV, CIV).

The protein resides in the mitochondrion inner membrane. Its function is as follows. Component of the ubiquinol-cytochrome c oxidoreductase, a multisubunit transmembrane complex that is part of the mitochondrial electron transport chain which drives oxidative phosphorylation. The respiratory chain contains 3 multisubunit complexes succinate dehydrogenase (complex II, CII), ubiquinol-cytochrome c oxidoreductase (cytochrome b-c1 complex, complex III, CIII) and cytochrome c oxidase (complex IV, CIV), that cooperate to transfer electrons derived from NADH and succinate to molecular oxygen, creating an electrochemical gradient over the inner membrane that drives transmembrane transport and the ATP synthase. The cytochrome b-c1 complex catalyzes electron transfer from ubiquinol to cytochrome c, linking this redox reaction to translocation of protons across the mitochondrial inner membrane, with protons being carried across the membrane as hydrogens on the quinol. In the process called Q cycle, 2 protons are consumed from the matrix, 4 protons are released into the intermembrane space and 2 electrons are passed to cytochrome c. QCR10 has a role in CIII assembly and RIP1 stability. The protein is Cytochrome b-c1 complex subunit 10 of Schizosaccharomyces pombe (strain 972 / ATCC 24843) (Fission yeast).